Here is a 227-residue protein sequence, read N- to C-terminus: Cytochrome c oxidase subunit 2 (227 aa).

Residues 1 to 14 (MAYPFQLGLQDATS) lie on the Mitochondrial intermembrane side of the membrane. A helical transmembrane segment spans residues 15–45 (PIMEELLHFHDHTLMIVFLISSLVLYIISSM). Residues 46 to 59 (LTTKLTHTSTMDAQ) lie on the Mitochondrial matrix side of the membrane. The chain crosses the membrane as a helical span at residues 60–87 (EVETVWTILPAIILVLIALPSLRILYMM). The Mitochondrial intermembrane segment spans residues 88–227 (DEINNPSLTV…YFETWSALML (140 aa)). Cu cation contacts are provided by His161, Cys196, Glu198, Cys200, His204, and Met207. Glu198 is a Mg(2+) binding site. Position 218 is a phosphotyrosine (Tyr218).

The protein belongs to the cytochrome c oxidase subunit 2 family. As to quaternary structure, component of the cytochrome c oxidase (complex IV, CIV), a multisubunit enzyme composed of 14 subunits. The complex is composed of a catalytic core of 3 subunits MT-CO1, MT-CO2 and MT-CO3, encoded in the mitochondrial DNA, and 11 supernumerary subunits COX4I, COX5A, COX5B, COX6A, COX6B, COX6C, COX7A, COX7B, COX7C, COX8 and NDUFA4, which are encoded in the nuclear genome. The complex exists as a monomer or a dimer and forms supercomplexes (SCs) in the inner mitochondrial membrane with NADH-ubiquinone oxidoreductase (complex I, CI) and ubiquinol-cytochrome c oxidoreductase (cytochrome b-c1 complex, complex III, CIII), resulting in different assemblies (supercomplex SCI(1)III(2)IV(1) and megacomplex MCI(2)III(2)IV(2)). Found in a complex with TMEM177, COA6, COX18, COX20, SCO1 and SCO2. Interacts with TMEM177 in a COX20-dependent manner. Interacts with COX20. Interacts with COX16. The cofactor is Cu cation.

The protein resides in the mitochondrion inner membrane. It catalyses the reaction 4 Fe(II)-[cytochrome c] + O2 + 8 H(+)(in) = 4 Fe(III)-[cytochrome c] + 2 H2O + 4 H(+)(out). Component of the cytochrome c oxidase, the last enzyme in the mitochondrial electron transport chain which drives oxidative phosphorylation. The respiratory chain contains 3 multisubunit complexes succinate dehydrogenase (complex II, CII), ubiquinol-cytochrome c oxidoreductase (cytochrome b-c1 complex, complex III, CIII) and cytochrome c oxidase (complex IV, CIV), that cooperate to transfer electrons derived from NADH and succinate to molecular oxygen, creating an electrochemical gradient over the inner membrane that drives transmembrane transport and the ATP synthase. Cytochrome c oxidase is the component of the respiratory chain that catalyzes the reduction of oxygen to water. Electrons originating from reduced cytochrome c in the intermembrane space (IMS) are transferred via the dinuclear copper A center (CU(A)) of subunit 2 and heme A of subunit 1 to the active site in subunit 1, a binuclear center (BNC) formed by heme A3 and copper B (CU(B)). The BNC reduces molecular oxygen to 2 water molecules using 4 electrons from cytochrome c in the IMS and 4 protons from the mitochondrial matrix. The sequence is that of Cytochrome c oxidase subunit 2 (MT-CO2) from Speothos venaticus (Bush dog).